The sequence spans 31 residues: Phospholipase A2 homolog P-elapitoxin-Aa1a beta chain (31 aa).

This sequence belongs to the phospholipase A2 family. Group I subfamily. In terms of assembly, heterotrimer of alpha, beta and gamma chains, each related to PLA2. Expressed by the venom gland.

It is found in the secreted. Heterotrimer: Snake venom phospholipase A2 (PLA2) that has presynaptic neurotoxicity. Inhibits nerve-evoked twitch contractions but not responses to cholinergic agonists acetylcholine and carbachol and to depolarizing agonist KCl. Causes a fade in tetanic contractions. Displays a triphasic mode of action with depression, enhancement and blockade of neurotransmission. Does not display myotoxic activity such as changes in baseline muscle tension or inhibition of directly stimulated muscle twitches. All subunits are necessary for maximum toxicity. Functionally, monomer: The beta chain has no enzymatic activity and is not toxic by itself. In Acanthophis antarcticus (Common death adder), this protein is Phospholipase A2 homolog P-elapitoxin-Aa1a beta chain.